The following is a 520-amino-acid chain: Rho GTPase-activating protein gacV (520 aa).

A helical membrane pass occupies residues N8 to I28. A coiled-coil region spans residues I28–M192. Disordered stretches follow at residues S33–N73, E121–Q189, N348–E373, and L489–E520. Basic residues predominate over residues S52–K62. Over residues P63–N73 the composition is skewed to basic and acidic residues. Acidic residues predominate over residues Q140–Q189. Residues V195–A472 form the Rho-GAP domain. Residues N348–N372 show a composition bias toward low complexity. The stretch at Y480 to E520 forms a coiled coil. Residues N493 to E520 show a composition bias toward acidic residues.

The protein resides in the membrane. In terms of biological role, rho GTPase-activating protein involved in the signal transduction pathway. The polypeptide is Rho GTPase-activating protein gacV (gacV) (Dictyostelium discoideum (Social amoeba)).